The following is a 444-amino-acid chain: Homocysteine/cysteine synthase (444 aa).

Position 208 is an N6-(pyridoxal phosphate)lysine (Lys-208).

The protein belongs to the trans-sulfuration enzymes family. As to quaternary structure, homotetramer. Requires pyridoxal 5'-phosphate as cofactor.

The protein localises to the cytoplasm. It catalyses the reaction O-acetyl-L-homoserine + methanethiol = L-methionine + acetate + H(+). The catalysed reaction is O-acetyl-L-homoserine + hydrogen sulfide = L-homocysteine + acetate. The enzyme catalyses O-acetyl-L-serine + hydrogen sulfide = L-cysteine + acetate. Its pathway is amino-acid biosynthesis; L-methionine biosynthesis via de novo pathway; L-homocysteine from O-acetyl-L-homoserine. It functions in the pathway amino-acid biosynthesis; L-cysteine biosynthesis; L-cysteine from L-serine: step 2/2. Catalyzes the conversion of O-acetyl-L-homoserine (OAH) into homocysteine in the methionine biosynthesis pathway. Also catalyzes the conversion of O-acetylserine (OAS) into cysteine, the last step in the cysteine biosynthesis pathway. The protein is Homocysteine/cysteine synthase (MET17) of Kluyveromyces lactis (strain ATCC 8585 / CBS 2359 / DSM 70799 / NBRC 1267 / NRRL Y-1140 / WM37) (Yeast).